The primary structure comprises 203 residues: Hydra actinoporin-like toxin 2 (203 aa).

Residues 1–21 form the signal peptide; that stretch reads MLSYLCFGCFLVSASLEIACG. The Cell attachment site signature appears at 175 to 177; sequence RGG.

Belongs to the actinoporin family. HALT subfamily. In terms of assembly, octamer or nonamer in membranes. Monomer in the soluble state. In vitro, interacts with folate receptor alpha (of target organism). Strongly expressed in the gland and mucous cells in the endoderm.

The protein resides in the nematocyst. It is found in the secreted. The protein localises to the target cell membrane. Its function is as follows. Pore-forming protein that forms hydrophilic pores and causes cytolysis. Compared to equinatoxin-2 (AC P61914), it reveals lower cytolysis activity (5-12-fold difference, tested on erythrocytes), a larger pore size (probably 2-3 nm) and different affinity to membrane lipids (100-fold lower affinity to sphingomyelin). Binds to sulfatides (SFT). Shows cytolytic activity on HeLa cells, with a different potency than its paralogs (from most potent to less potent: HALT-4&gt;HALT-6~HALT-1&gt;HALT-3&gt;HALT-7&gt;HALT-2). Pore formation is a multi-step process that involves specific recognition of membrane lipid by a protein aromatic residues rich region, firm binding to the membrane (mainly driven by hydrophobic interactions) accompanied by the transfer of the N-terminal region to the lipid-water interface and finally pore formation after oligomerization of monomers. In vitro, binds to the folate receptor alpha (FOLR1), a GPI-anchored membrane protein that plays a major role in the uptake of folate/folic acid into cells via endocytosis, suggesting a possible involvement of this receptor in the mechanism of HALT-1-induced cell lysis. In vivo, does not cause visible paralysis in larvae of the blowfly Sarcophaga faculata, the most common arthropod prey of Hydra. This chain is Hydra actinoporin-like toxin 2, found in Hydra vulgaris (Hydra).